Reading from the N-terminus, the 157-residue chain is Dihydrofolate reductase type 5 (157 aa).

In terms of domain architecture, DHFR spans 2–156; the sequence is KVSLMAAKAK…INYCYQIWQK (155 aa).

This sequence belongs to the dihydrofolate reductase family. As to quaternary structure, homodimer.

It carries out the reaction (6S)-5,6,7,8-tetrahydrofolate + NADP(+) = 7,8-dihydrofolate + NADPH + H(+). The protein operates within cofactor biosynthesis; tetrahydrofolate biosynthesis; 5,6,7,8-tetrahydrofolate from 7,8-dihydrofolate: step 1/1. Key enzyme in folate metabolism. Catalyzes an essential reaction for de novo glycine and purine synthesis, and for DNA precursor synthesis. This chain is Dihydrofolate reductase type 5 (dhfrV), found in Escherichia coli.